The sequence spans 118 residues: MAGVRQHGWRAIPAVCSEYGADTLPDRYRSDGRCLLFWQQAGISALKQELEVKTPYRAMNHPVIGVVTKADLASMEQISLVKSWLREAGAHNVLVTSAVNNNGVTELFALLHTEEGCC.

In Escherichia coli (strain K12), this protein is Protein YoeF (yoeF).